The following is a 160-amino-acid chain: MGVFNYEAETPSVIPAARLFKAFILDGDKLLPKVAPEAVSSVENIEGNGGPGTIKKITFPEGSPFKYVKERVDEVDRVNFKYSFSVIEGGAVGDALEKVCNEIKIVAAPDGGSILKISNKFHTKGDHEINAEQIKIEKEKAVGLLKAVESYLLAHSDAYN.

Belongs to the BetVI family.

The chain is Major pollen allergen Aln g 1 from Alnus glutinosa (European alder).